Reading from the N-terminus, the 156-residue chain is MSKRNQVSYVRPAEPAFLARFKERVGYKEGPTVETKRIQPQLPEEDGDHSDKEDEQPQVVVLKKGDLSAEEVMKIKAEIKAARADEEPPSADGRIMYRKPVKRSSDEKHSGLSASSKKKKTKEEDEINKQDSVKKNSQKQIKNSSLLSFDNEDENE.

Disordered stretches follow at residues 22–64 (KERV…VLKK) and 81–156 (AARA…DENE). Acidic residues predominate over residues 43 to 56 (PEEDGDHSDKEDEQ). Position 50 is a phosphoserine (S50). N6-acetyllysine is present on K108. Positions 121-134 (TKEEDEINKQDSVK) are enriched in basic and acidic residues. Phosphoserine is present on S148.

This is an uncharacterized protein from Bos taurus (Bovine).